The primary structure comprises 225 residues: 7-carboxy-7-deazaguanine synthase (225 aa).

Substrate contacts are provided by residues 14 to 16 (LQG) and arginine 29. The 206-residue stretch at 20 to 225 (HFGKSAFFIR…LQTHKWLGVL (206 aa)) folds into the Radical SAM core domain. [4Fe-4S] cluster contacts are provided by cysteine 33, cysteine 37, and cysteine 40. Threonine 42 provides a ligand contact to Mg(2+). Substrate is bound at residue threonine 77. S-adenosyl-L-methionine contacts are provided by residues glycine 79 and 127-129 (SPK).

Belongs to the radical SAM superfamily. 7-carboxy-7-deazaguanine synthase family. Homodimer. Requires [4Fe-4S] cluster as cofactor. S-adenosyl-L-methionine serves as cofactor. The cofactor is Mg(2+).

It catalyses the reaction 6-carboxy-5,6,7,8-tetrahydropterin + H(+) = 7-carboxy-7-deazaguanine + NH4(+). It participates in purine metabolism; 7-cyano-7-deazaguanine biosynthesis. Catalyzes the complex heterocyclic radical-mediated conversion of 6-carboxy-5,6,7,8-tetrahydropterin (CPH4) to 7-carboxy-7-deazaguanine (CDG), a step common to the biosynthetic pathways of all 7-deazapurine-containing compounds. This Prochlorococcus marinus (strain SARG / CCMP1375 / SS120) protein is 7-carboxy-7-deazaguanine synthase.